Here is a 196-residue protein sequence, read N- to C-terminus: Probable malonic semialdehyde reductase RutE (196 aa).

It belongs to the nitroreductase family. HadB/RutE subfamily. Requires FMN as cofactor.

The catalysed reaction is 3-hydroxypropanoate + NADP(+) = 3-oxopropanoate + NADPH + H(+). In terms of biological role, may reduce toxic product malonic semialdehyde to 3-hydroxypropionic acid, which is excreted. The chain is Probable malonic semialdehyde reductase RutE from Escherichia coli O6:H1 (strain CFT073 / ATCC 700928 / UPEC).